We begin with the raw amino-acid sequence, 346 residues long: Phenylalanine--tRNA ligase alpha subunit (346 aa).

Mg(2+) is bound at residue E261.

Belongs to the class-II aminoacyl-tRNA synthetase family. Phe-tRNA synthetase alpha subunit type 1 subfamily. As to quaternary structure, tetramer of two alpha and two beta subunits. It depends on Mg(2+) as a cofactor.

It localises to the cytoplasm. The enzyme catalyses tRNA(Phe) + L-phenylalanine + ATP = L-phenylalanyl-tRNA(Phe) + AMP + diphosphate + H(+). In Streptococcus agalactiae serotype III (strain NEM316), this protein is Phenylalanine--tRNA ligase alpha subunit.